The following is a 157-amino-acid chain: Transcriptional repressor NrdR (157 aa).

Residues 1–24 (MRCPKCGGNKSSVVDSRQAEDGNT) are disordered. The segment at 3 to 34 (CPKCGGNKSSVVDSRQAEDGNTIRRRRECEEC) is a zinc-finger region. The region spanning 49–139 (LVVVKKDGTR…VYRSFKDVGE (91 aa)) is the ATP-cone domain.

It belongs to the NrdR family. The cofactor is Zn(2+).

Negatively regulates transcription of bacterial ribonucleotide reductase nrd genes and operons by binding to NrdR-boxes. This is Transcriptional repressor NrdR from Streptococcus sanguinis (strain SK36).